A 464-amino-acid chain; its full sequence is Vitamin D3 hydroxylase-associated protein (464 aa).

Catalysis depends on charge relay system residues K150 and S225. The active-site Acyl-ester intermediate is the S249.

Belongs to the amidase family. As to expression, kidney.

Its subcellular location is the mitochondrion inner membrane. Functionally, may have a vitamin D3 hydroxylase regulatory function. The protein is Vitamin D3 hydroxylase-associated protein of Gallus gallus (Chicken).